We begin with the raw amino-acid sequence, 361 residues long: Chorismate synthase (361 aa).

NADP(+) contacts are provided by arginine 48 and arginine 54. FMN-binding positions include 125-127 (RSS), 238-239 (NA), glycine 278, 293-297 (KPTSS), and arginine 319.

The protein belongs to the chorismate synthase family. In terms of assembly, homotetramer. FMNH2 is required as a cofactor.

The catalysed reaction is 5-O-(1-carboxyvinyl)-3-phosphoshikimate = chorismate + phosphate. It functions in the pathway metabolic intermediate biosynthesis; chorismate biosynthesis; chorismate from D-erythrose 4-phosphate and phosphoenolpyruvate: step 7/7. Its function is as follows. Catalyzes the anti-1,4-elimination of the C-3 phosphate and the C-6 proR hydrogen from 5-enolpyruvylshikimate-3-phosphate (EPSP) to yield chorismate, which is the branch point compound that serves as the starting substrate for the three terminal pathways of aromatic amino acid biosynthesis. This reaction introduces a second double bond into the aromatic ring system. This chain is Chorismate synthase, found in Enterobacter sp. (strain 638).